A 314-amino-acid chain; its full sequence is Methionyl-tRNA formyltransferase (314 aa).

110-113 (SLLP) is a (6S)-5,6,7,8-tetrahydrofolate binding site.

The protein belongs to the Fmt family.

It catalyses the reaction L-methionyl-tRNA(fMet) + (6R)-10-formyltetrahydrofolate = N-formyl-L-methionyl-tRNA(fMet) + (6S)-5,6,7,8-tetrahydrofolate + H(+). In terms of biological role, attaches a formyl group to the free amino group of methionyl-tRNA(fMet). The formyl group appears to play a dual role in the initiator identity of N-formylmethionyl-tRNA by promoting its recognition by IF2 and preventing the misappropriation of this tRNA by the elongation apparatus. This is Methionyl-tRNA formyltransferase from Dichelobacter nodosus (strain VCS1703A).